Consider the following 138-residue polypeptide: Histone H2B.8 (138 aa).

Basic and acidic residues predominate over residues 1–38; the sequence is MAPKAAEKKPAGKKPAEKAPAEKLPKAEKKITKEGGSE. The disordered stretch occupies residues 1–45; sequence MAPKAAEKKPAGKKPAEKAPAEKLPKAEKKITKEGGSEKKKKKSK. Position 2 is a n,N,N-trimethylalanine; alternate (A2). A2 carries the n,N-dimethylalanine; alternate modification. A2 is modified (N-methylalanine; alternate). An N6-methyllysine modification is found at K4. An N6-acetyllysine mark is found at K8 and K13. K14 carries the post-translational modification N6,N6-dimethyllysine. 4 positions are modified to N6-acetyllysine: K18, K23, K29, and K30. A Glycyl lysine isopeptide (Lys-Gly) (interchain with G-Cter in ubiquitin) cross-link involves residue K134.

The protein belongs to the histone H2B family. The nucleosome is a histone octamer containing two molecules each of H2A, H2B, H3 and H4 assembled in one H3-H4 heterotetramer and two H2A-H2B heterodimers. The octamer wraps approximately 147 bp of DNA. In terms of processing, can be acetylated to form H2BK6ac, H2BK33ac and H2BK34ac. Post-translationally, monoubiquitinated by BRE1 to form H2BK143ub1 and deubiquitinated by UBP26. Required for heterochromatic histone H3 di- and trimethylation at H3K4me. May give a specific tag for epigenetic transcriptional activation.

The protein resides in the nucleus. Its subcellular location is the chromosome. In terms of biological role, core component of nucleosome. Nucleosomes wrap and compact DNA into chromatin, limiting DNA accessibility to the cellular machineries which require DNA as a template. Histones thereby play a central role in transcription regulation, DNA repair, DNA replication and chromosomal stability. DNA accessibility is regulated via a complex set of post-translational modifications of histones, also called histone code, and nucleosome remodeling. This chain is Histone H2B.8, found in Arabidopsis thaliana (Mouse-ear cress).